A 255-amino-acid chain; its full sequence is 14-3-3 protein 5 (255 aa).

It belongs to the 14-3-3 family. In terms of assembly, homodimer.

The sequence is that of 14-3-3 protein 5 (TFT5) from Solanum lycopersicum (Tomato).